Reading from the N-terminus, the 30-residue chain is M-poneritoxin-Nc3a (30 aa).

This sequence belongs to the ponericin-G family. In terms of tissue distribution, expressed by the venom gland.

It is found in the secreted. The protein resides in the target cell membrane. Its function is as follows. Membrane-perturbating peptide with multiple activities. It is insecticidal, since it induces contractile paralysis in insects (L.cuprina) during several hours and death after 24 hours. It shows a relatively strong and broad-spectrum antibacterial activity against both Gram-positive and Gram-negative bacteria (MIC&lt;20 uM). It is also antiparasitic, since it potently inhibits the larval development of the major pathogenic nematode of ruminants (H.contortus, IC(50)=5.6 uM) and reduces the motility of adult males of the other nematode B.malayi. It also shows cytotoxic activity against HEK293 cells (EC(50)=5-7 uM) but does not induce hemolysis in human erythrocytes. In addition, it causes a moderate increase in intracellular calcium concentration on neuronal and epithelial cell lines, which supports a non-specific membrane perturbation mechanism of action. In vivo, it induces pain by intraplantar injection into mice, suggesting a defensive function against vertebrate predators. The chain is M-poneritoxin-Nc3a from Neoponera commutata (Large hunting ant).